We begin with the raw amino-acid sequence, 795 residues long: MAANKDEFSVKQIFPKLGGERGARNPRYGPTSSHDLVEQMEFLYVQVIQAINNSVVNPSARICCPVVEITLGNYKSSTKNLPMGPNMDWNQVFAFDKSKGDVLSVTLKDGPTNTVINKRNFKLASEIPTRVPPDARIAPQWYSMHNTETDFYMELLMSVWFGTQVDEVYPEAWFSDACEVCASRVINTRPKVYLAPRLCYVRVTIVSGHDLISKDKNKTPSVYVTATLGKVALKTKVSSGTNPSWNQDLIFVASEPLEGTVYIRLIDREDEQHEGCIGTLKKKLTEMTPLKVPSSAPALFYDIEMPTEVKPAGDSRRFASRLKMKLATDQAYHVAEECTQYSSDNRAFVKGLWPGLLGKLEIGILGATGLKGSDEKKQTIDSYVVAKYGNKWARTRTVVNSVSPKWNEQYSWDVYEKCTVLTLGIYDNRQILEDKNKANDVPIGKVRIPLNRVQSDWIYTCSYPILKLGSSGLKKMGELQLAVRFVYVAQGYARYSAPFRWMLPKAHYKSPLSMYQIDKLRAQAVEINCANLARTEPALRSEVVSDMLKPKSRNFSIRISKDNFDRLYTVVKMVLWCVSVIASVRSTTACTPKFIALGVSFVFLFWEYYIYWLVTSWLVAYCIVLCIVVILLREILKSPRQTYNWLFYRNVTPPPLILVDLKLRKLDSINLDELAEEFDSFPSSENDLNILRMRYDRLRKIMENVMLLMGDAATQGERLLAAFTLLERPFVLIILLALCYCSMLVVCLGWDLHVRKCLIFVFICYWVQLPWFRNNLPDGSLNFFRRLPSNEDLMF.

C2 domains follow at residues 24–142 (RNPR…PQWY), 180–298 (VCAS…SAPA), and 341–463 (YSSD…TCSY). N57, D109, and N113 together coordinate Ca(2+). A run of 4 helical transmembrane segments spans residues 590–610 (CTPK…EYYI), 612–632 (WLVT…VILL), 730–750 (FVLI…CLGW), and 752–772 (LHVR…LPWF).

This sequence belongs to the MCTP family. Requires Ca(2+) as cofactor. In terms of tissue distribution, expressed in root vascular tissues and meristems. Observed in flowers.

It localises to the endoplasmic reticulum membrane. Functionally, may function as a signaling molecule by regulating the trafficking of other regulators. The protein is Multiple C2 domain and transmembrane region protein 12 of Arabidopsis thaliana (Mouse-ear cress).